The following is a 445-amino-acid chain: 26S proteasome regulatory subunit RPN5 (445 aa).

N-acetylserine is present on serine 2. Positions 233–407 (EYLEVAQYLQ…KIVNFEKPKN (175 aa)) constitute a PCI domain.

The protein belongs to the proteasome subunit p55 family. N-acetylated by NAT1.

Its function is as follows. Acts as a regulatory subunit of the 26S proteasome which is involved in the ATP-dependent degradation of ubiquitinated proteins. This Saccharomyces cerevisiae (strain ATCC 204508 / S288c) (Baker's yeast) protein is 26S proteasome regulatory subunit RPN5 (RPN5).